A 910-amino-acid chain; its full sequence is Protein translocase subunit SecA (910 aa).

ATP is bound by residues Gln-87, 105 to 109 (GEGKT), and Asp-508. The segment covering 558–568 (RHESRRIDNQL) has biased composition (basic and acidic residues). 2 disordered regions span residues 558-580 (RHESRRIDNQLRGRSGRQGDPGS) and 873-910 (AAQQGIAQVQRDEPKIGRNDPCPCGSGKKYKHCHGQLS). Zn(2+) is bound by residues Cys-894, Cys-896, Cys-905, and His-906. Residues 900-910 (KKYKHCHGQLS) are compositionally biased toward basic residues.

The protein belongs to the SecA family. As to quaternary structure, monomer and homodimer. Part of the essential Sec protein translocation apparatus which comprises SecA, SecYEG and auxiliary proteins SecDF-YajC and YidC. Zn(2+) is required as a cofactor.

It is found in the cell inner membrane. The protein localises to the cytoplasm. The enzyme catalyses ATP + H2O + cellular proteinSide 1 = ADP + phosphate + cellular proteinSide 2.. Its function is as follows. Part of the Sec protein translocase complex. Interacts with the SecYEG preprotein conducting channel. Has a central role in coupling the hydrolysis of ATP to the transfer of proteins into and across the cell membrane, serving both as a receptor for the preprotein-SecB complex and as an ATP-driven molecular motor driving the stepwise translocation of polypeptide chains across the membrane. In Stenotrophomonas maltophilia (strain R551-3), this protein is Protein translocase subunit SecA.